A 709-amino-acid chain; its full sequence is DCC-interacting protein 13-alpha (709 aa).

Residues 1–428 (MPGIDKLPIE…RPPTARTSSS (428 aa)) form a required for RAB5A binding region. The BAR domain maps to 3–268 (GIDKLPIEET…DPLYVPDPDP (266 aa)). Residues 215–259 (SENLNEQLEEFLANIGTSVQNVRREMDSDIETMQQTIEDLEVASD) are a coiled coil. Residues 277 to 375 (LTRKAGYLNA…WICTINNISK (99 aa)) enclose the PH domain. Disordered stretches follow at residues 397 to 434 (AVTP…LGSE), 467 to 491 (GQAK…STKS), and 645 to 709 (VKEK…ESEA). Phosphothreonine is present on threonine 399. The residue at position 401 (serine 401) is a Phosphoserine. Residues 403-414 (SFQQRHESLRPA) carry the F&amp;H motif. Serine 410 carries the post-translational modification Phosphoserine; by PKA. Positions 496-656 (SILHQLFIVR…EKQQKELNKQ (161 aa)) constitute a PID domain. Residues 621–673 (LAKQIALHAELDRRASEKQKEIERVKEKQQKELNKQKQIEKDLEEQSRLIAAS) adopt a coiled-coil conformation. Residues 645 to 667 (VKEKQQKELNKQKQIEKDLEEQS) are compositionally biased toward basic and acidic residues. The span at 674–693 (SRPNQASSEGQFVVLSSSQS) shows a compositional bias: polar residues. A phosphoserine mark is found at serine 693 and serine 696. Positions 700–709 (EGGKKRESEA) are enriched in basic and acidic residues.

As to quaternary structure, homodimer. Binds RAB5A/Rab5 through an N-terminal domain. This interaction is essential for its recruitment to endosomal membranes as well as its role in cell proliferation. Binds DCC and the catalytic domain of the inactive form of AKT2 through its PID domain. Binds PIK3CA and subunits of the NuRD/MeCP1 complex. Interacts with OCRL and INPP5B. Interacts with NTRK2. Interacts with APPL2; interaction is independent of follicle stimulating hormone stimulation; interaction is decreased by adiponectin in a time-dependent manner. Forms a complex with APPL2 and RUVBL2. Forms a complex comprising APPL2, RUVBL2, CTNNB1, HDAC1 and HDAC2; interaction reduces interaction between CTNNB1, HDAC1, HDAC2 and RUVBL2 leading to the decrease of deacetylase activity of this complex; affects the recruitment of repressive complexes to the Wnt target genes. Interacts with ANXA2. Interacts with TGFBR1; interaction is TGF beta dependent; mediates trafficking of the TGFBR1 from the endosomes to the nucleus via microtubules in a TRAF6-dependent manner. Interacts with PRKCZ. Interacts with PIK3R1 and APPL2. Interacts with ADIPOR1; ADIPOQ enhances this interaction; inhibites adiponectin-stimulated binding of APPL2 to ADIPOR1. Phosphorylation at Ser-410 by PKA severely impairs binding to OCRL. In terms of tissue distribution, high levels in heart, ovary, pancreas and skeletal muscle.

It is found in the early endosome membrane. Its subcellular location is the nucleus. The protein resides in the cytoplasm. The protein localises to the endosome. It localises to the cell projection. It is found in the ruffle. Its subcellular location is the cytoplasmic vesicle. The protein resides in the phagosome. Multifunctional adapter protein that binds to various membrane receptors, nuclear factors and signaling proteins to regulate many processes, such as cell proliferation, immune response, endosomal trafficking and cell metabolism. Regulates signaling pathway leading to cell proliferation through interaction with RAB5A and subunits of the NuRD/MeCP1 complex. Functions as a positive regulator of innate immune response via activation of AKT1 signaling pathway by forming a complex with APPL1 and PIK3R1. Inhibits Fc-gamma receptor-mediated phagocytosis through PI3K/Akt signaling in macrophages. Regulates TLR4 signaling in activated macrophages. Involved in trafficking of the TGFBR1 from the endosomes to the nucleus via microtubules in a TRAF6-dependent manner. Plays a role in cell metabolism by regulating adiponecting and insulin signaling pathways. Required for fibroblast migration through HGF cell signaling. Positive regulator of beta-catenin/TCF-dependent transcription through direct interaction with RUVBL2/reptin resulting in the relief of RUVBL2-mediated repression of beta-catenin/TCF target genes by modulating the interactions within the beta-catenin-reptin-HDAC complex. The polypeptide is DCC-interacting protein 13-alpha (Homo sapiens (Human)).